Here is a 534-residue protein sequence, read N- to C-terminus: Protein tweety homolog 2 (534 aa).

The Extracellular segment spans residues Met1–Ser44. The N-linked (GlcNAc...) asparagine glycan is linked to Asn31. A helical transmembrane segment spans residues Leu45–Ala65. Residues Tyr66–Cys87 lie on the Cytoplasmic side of the membrane. Residues Cys88 to Phe108 traverse the membrane as a helical segment. Residues Tyr109 to Trp213 lie on the Extracellular side of the membrane. Ca(2+)-binding residues include Glu113 and Asp116. An N-linked (GlcNAc) asparagine glycan is attached at Asn129. The RGD motif lies at Arg164 to Asp166. Residue Thr199 is modified to Phosphothreonine. A helical membrane pass occupies residues Leu214 to Leu234. The Cytoplasmic portion of the chain corresponds to Ala235 to Cys240. The chain crosses the membrane as a helical span at residues Leu241–Ala261. Residues Ala262–Gly388 are Extracellular-facing. Disulfide bonds link Cys274/Cys382 and Cys300/Cys367. The N-linked (GlcNAc...) asparagine glycan is linked to Asn283. A glycan (N-linked (GlcNAc) asparagine) is linked at Asn352. The helical transmembrane segment at Leu389 to Ala409 threads the bilayer. Residues Gly410–Ala534 are Cytoplasmic-facing. Ser504 is subject to Phosphoserine. The PY-motif; mediates interaction with NEDD4L motif lies at Pro506–Tyr509.

Belongs to the tweety family. As to quaternary structure, homodimer. Forms cis-homodimers in the presence of Ca(+2) and forms monomers and trans-dimers in the absence of Ca(2+). Interacts with NEDD4L. N- Glycosylated. Contains high-mannose, hybrid and complex oligosaccharides. Post-translationally, ubiquitinated by NEDD4L, leading to its proteasomal degradation. In terms of tissue distribution, expressed at higher level in brain and testis and at lower levels in heart, ovary, spleen and peripheral blood leukocytes. Up-regulated in 13 of 16 renal cell carcinoma samples examined. Up-regulated in colon carcinoma.

The protein resides in the cell membrane. It catalyses the reaction chloride(in) = chloride(out). The enzyme catalyses L-glutamate(out) = L-glutamate(in). Its function is as follows. Calcium-independent, swelling-dependent volume-regulated anion channel (VRAC-swell) which plays a pivotal role in the process of regulatory volume decrease (RVD) in the brain through the efflux of anions like chloride and organic osmolytes like glutamate. Probable large-conductance Ca(2+)-activated chloride channel. The sequence is that of Protein tweety homolog 2 (TTYH2) from Homo sapiens (Human).